Consider the following 235-residue polypeptide: Cytochrome c-554 (235 aa).

Positions M1–A24 are cleaved as a signal peptide. C35, C38, H39, H51, C84, C87, H88, C112, C115, H116, H126, C158, C161, H162, and H203 together coordinate heme. Positions N121–D144 are disordered.

Binds 4 heme groups per subunit.

The protein resides in the periplasm. Involved in ammonia oxidation; accepts electrons directly from hydroxylamine oxidoreductase (HAO). This is Cytochrome c-554 (cycA1) from Nitrosomonas europaea (strain ATCC 19718 / CIP 103999 / KCTC 2705 / NBRC 14298).